The primary structure comprises 238 residues: Pyridoxine 5'-phosphate synthase (238 aa).

3-amino-2-oxopropyl phosphate is bound at residue Asn-7. 9–10 (DH) contacts 1-deoxy-D-xylulose 5-phosphate. Position 18 (Arg-18) interacts with 3-amino-2-oxopropyl phosphate. Catalysis depends on His-43, which acts as the Proton acceptor. 2 residues coordinate 1-deoxy-D-xylulose 5-phosphate: Arg-45 and His-50. Catalysis depends on Glu-70, which acts as the Proton acceptor. 1-deoxy-D-xylulose 5-phosphate is bound at residue Thr-100. His-190 acts as the Proton donor in catalysis. 3-amino-2-oxopropyl phosphate is bound by residues Gly-191 and 212-213 (GH).

Belongs to the PNP synthase family. In terms of assembly, homooctamer; tetramer of dimers.

It is found in the cytoplasm. The catalysed reaction is 3-amino-2-oxopropyl phosphate + 1-deoxy-D-xylulose 5-phosphate = pyridoxine 5'-phosphate + phosphate + 2 H2O + H(+). It participates in cofactor biosynthesis; pyridoxine 5'-phosphate biosynthesis; pyridoxine 5'-phosphate from D-erythrose 4-phosphate: step 5/5. In terms of biological role, catalyzes the complicated ring closure reaction between the two acyclic compounds 1-deoxy-D-xylulose-5-phosphate (DXP) and 3-amino-2-oxopropyl phosphate (1-amino-acetone-3-phosphate or AAP) to form pyridoxine 5'-phosphate (PNP) and inorganic phosphate. The chain is Pyridoxine 5'-phosphate synthase from Prochlorococcus marinus (strain AS9601).